We begin with the raw amino-acid sequence, 932 residues long: MYCBP-associated protein (932 aa).

2 disordered regions span residues 1 to 39 (MMKK…PVSN) and 165 to 187 (EEPK…PPQH). Positions 165–178 (EEPKPKPPKEEERP) are enriched in basic and acidic residues. Phosphoserine is present on serine 559. Position 560 is a phosphothreonine (threonine 560). Serine 566 is subject to Phosphoserine. The disordered stretch occupies residues 789–886 (LPDEQGQKSP…TAPSQEPIDP (98 aa)). Polar residues predominate over residues 795-806 (QKSPPVTESKVT). Positions 810-869 (AGKEDRRGGAQEKKQLGTKDKDDKRGSKTPGKEDRPNSKKLKPKDDKKVVKSASRDRLLS) are enriched in basic and acidic residues.

Interacts with MYCBP.

It localises to the cytoplasm. Its subcellular location is the membrane. Functionally, may play a role in spermatogenesis. May be involved in synaptic processes. This is MYCBP-associated protein from Mus musculus (Mouse).